The following is a 117-amino-acid chain: Large ribosomal subunit protein bL20c (117 aa).

It belongs to the bacterial ribosomal protein bL20 family.

It localises to the plastid. The protein localises to the chloroplast. Functionally, binds directly to 23S ribosomal RNA and is necessary for the in vitro assembly process of the 50S ribosomal subunit. It is not involved in the protein synthesizing functions of that subunit. This Platanus occidentalis (Sycamore) protein is Large ribosomal subunit protein bL20c.